A 195-amino-acid polypeptide reads, in one-letter code: Mannitol operon repressor (195 aa).

This sequence belongs to the MtlR/FumE family. Homodimer. Can also form higher level multimer aggregates.

In terms of biological role, involved in the repression of the expression of the mannitol mtlADR operon. Does not bind the operator/promoter regulatory region of this operon. Therefore, seems to belong to a new class of transcription factors in bacteria that may regulate gene expression indirectly, perhaps as a part of a larger transcriptional complex. The sequence is that of Mannitol operon repressor from Escherichia coli O6:H1 (strain CFT073 / ATCC 700928 / UPEC).